Here is a 269-residue protein sequence, read N- to C-terminus: Putative pyruvate, phosphate dikinase regulatory protein (269 aa).

151-158 (GVSRSSKT) lines the ADP pocket.

It belongs to the pyruvate, phosphate/water dikinase regulatory protein family. PDRP subfamily.

It catalyses the reaction N(tele)-phospho-L-histidyl/L-threonyl-[pyruvate, phosphate dikinase] + ADP = N(tele)-phospho-L-histidyl/O-phospho-L-threonyl-[pyruvate, phosphate dikinase] + AMP + H(+). It carries out the reaction N(tele)-phospho-L-histidyl/O-phospho-L-threonyl-[pyruvate, phosphate dikinase] + phosphate + H(+) = N(tele)-phospho-L-histidyl/L-threonyl-[pyruvate, phosphate dikinase] + diphosphate. Bifunctional serine/threonine kinase and phosphorylase involved in the regulation of the pyruvate, phosphate dikinase (PPDK) by catalyzing its phosphorylation/dephosphorylation. The polypeptide is Putative pyruvate, phosphate dikinase regulatory protein (Geobacter metallireducens (strain ATCC 53774 / DSM 7210 / GS-15)).